Here is a 335-residue protein sequence, read N- to C-terminus: MPTVIGFEGSANKLGIGIIRDGVVLSNPRHTYITPPGQGFMPRDTAKHHQEHAIDILRRALDEAQIRPQDIDCICYTKGPGMGAPLVAVAVVARTVAQLWKKPIIGVNHCIGHIEMGRLITGANNPTVLYVSGGNTQVIAYLQKRYRIFGETIDIAVGNCLDRFARVLKLSNDPSPGYNIEQMAKKGKKLIELPYTVKGMDVSFSGILSYIECMAHKLLSSEECTPEDLCFSLQETVFAMLVETTERAMAHCGSNEVLIVGGVGCNKRLQEMMDVMAKERGAKLYATDERFCIDNGAMIAQAGWEMFQTGSVTPLEQTTCTQRFRTDEVEVTWRD.

3 residues coordinate a divalent metal cation: His109, His113, and Tyr130. Substrate-binding positions include Tyr130–Gly134, Asp162, Gly177, Glu181, and Asn266. Asp294 contacts a divalent metal cation.

It belongs to the KAE1 / TsaD family. Component of the EKC/KEOPS complex; the whole complex dimerizes. The cofactor is a divalent metal cation.

Its subcellular location is the cytoplasm. It is found in the nucleus. It carries out the reaction L-threonylcarbamoyladenylate + adenosine(37) in tRNA = N(6)-L-threonylcarbamoyladenosine(37) in tRNA + AMP + H(+). Component of the EKC/KEOPS complex that is required for the formation of a threonylcarbamoyl group on adenosine at position 37 (t(6)A37) in tRNAs that read codons beginning with adenine. The complex is probably involved in the transfer of the threonylcarbamoyl moiety of threonylcarbamoyl-AMP (TC-AMP) to the N6 group of A37. Osgep likely plays a direct catalytic role in this reaction, but requires other protein(s) of the complex to fulfill this activity. This Nematostella vectensis (Starlet sea anemone) protein is Probable tRNA N6-adenosine threonylcarbamoyltransferase.